The sequence spans 114 residues: Large ribosomal subunit protein uL22 (114 aa).

It belongs to the universal ribosomal protein uL22 family. In terms of assembly, part of the 50S ribosomal subunit.

Functionally, this protein binds specifically to 23S rRNA; its binding is stimulated by other ribosomal proteins, e.g. L4, L17, and L20. It is important during the early stages of 50S assembly. It makes multiple contacts with different domains of the 23S rRNA in the assembled 50S subunit and ribosome. The globular domain of the protein is located near the polypeptide exit tunnel on the outside of the subunit, while an extended beta-hairpin is found that lines the wall of the exit tunnel in the center of the 70S ribosome. This is Large ribosomal subunit protein uL22 from Desulfitobacterium hafniense (strain DSM 10664 / DCB-2).